A 724-amino-acid polypeptide reads, in one-letter code: Ribosomal RNA large subunit methyltransferase K/L (724 aa).

Residues 42 to 153 form the THUMP domain; it reads DAQRLVLWSR…KGRATLSVDL (112 aa).

This sequence belongs to the methyltransferase superfamily. RlmKL family.

The protein localises to the cytoplasm. It carries out the reaction guanosine(2445) in 23S rRNA + S-adenosyl-L-methionine = N(2)-methylguanosine(2445) in 23S rRNA + S-adenosyl-L-homocysteine + H(+). The catalysed reaction is guanosine(2069) in 23S rRNA + S-adenosyl-L-methionine = N(2)-methylguanosine(2069) in 23S rRNA + S-adenosyl-L-homocysteine + H(+). In terms of biological role, specifically methylates the guanine in position 2445 (m2G2445) and the guanine in position 2069 (m7G2069) of 23S rRNA. This is Ribosomal RNA large subunit methyltransferase K/L from Xylella fastidiosa (strain M23).